The chain runs to 365 residues: Outer capsid protein sigma-3 (365 aa).

A CCHC-type zinc finger spans residues 51–73; that stretch reads CMHCLGVVGSLQRKLKHLPHHRC.

This sequence belongs to the orthoreovirus sigma-3 protein family. As to quaternary structure, heterohexamer of three sigma-3 and three Mu-1 proteins. The RNA-binding form is probably a homodimer. In terms of processing, cleaved during virus the endosomal proteolytic disassembly of the outer capsid.

It is found in the virion. Stimulates translation by blocking the activation of the dsRNA-dependent protein kinase EIF2AK2/PKR, thereby inhibiting the host interferon response. Sigma3 prevents the activation of EIF2AK2 by competing with the kinase for dsRNA-binding. In terms of biological role, the viral outer shell polypeptides, of which sigma-3 is one, impose structural constraints that prevent elongation of nascent transcripts by the RNA-dependent RNA polymerase lambda-3. The protein is Outer capsid protein sigma-3 (S4) of Mammalia (T1L).